Consider the following 203-residue polypeptide: Ribosomal RNA small subunit methyltransferase G (203 aa).

S-adenosyl-L-methionine-binding positions include glycine 73, leucine 78, 124 to 125, and arginine 138; that span reads VE.

This sequence belongs to the methyltransferase superfamily. RNA methyltransferase RsmG family.

Its subcellular location is the cytoplasm. It carries out the reaction guanosine(527) in 16S rRNA + S-adenosyl-L-methionine = N(7)-methylguanosine(527) in 16S rRNA + S-adenosyl-L-homocysteine. Functionally, specifically methylates the N7 position of guanine in position 527 of 16S rRNA. In Haemophilus ducreyi (strain 35000HP / ATCC 700724), this protein is Ribosomal RNA small subunit methyltransferase G.